The primary structure comprises 109 residues: MAIGLNVTEPEGTCSDEDCPFHGNLSVRGQVLEGEVASTDMEKTVVVEREYDVFVPKYDRYMKRRSRVPAHAPECFDISVGDTVSIAETRPLSKTKSHVVVEITDGGDA.

Belongs to the universal ribosomal protein uS17 family. As to quaternary structure, part of the 30S ribosomal subunit.

In terms of biological role, one of the primary rRNA binding proteins, it binds specifically to the 5'-end of 16S ribosomal RNA. This is Small ribosomal subunit protein uS17 from Halobacterium salinarum (strain ATCC 29341 / DSM 671 / R1).